The primary structure comprises 58 residues: Proteinase inhibitor PSKP-2 (58 aa).

The Kazal-like domain occupies 1–58 (VIEPDCKKYEGKKCPPDIALVCGTNGREYYNECALCVFIRDSTLKADKAIKIKKWGKC). Intrachain disulfides connect C6-C36, C14-C33, and C22-C58.

In terms of tissue distribution, skin.

The protein resides in the secreted. In terms of biological role, may have a role in mucosal defense against microbes by interacting directly with their membranes. This chain is Proteinase inhibitor PSKP-2, found in Phyllomedusa sauvagei (Sauvage's leaf frog).